Here is a 198-residue protein sequence, read N- to C-terminus: Nucleoid occlusion factor SlmA (198 aa).

Residues 10–70 enclose the HTH tetR-type domain; it reads NRREEILQSL…SLIEFIEDSL (61 aa). The segment at residues 33–52 is a DNA-binding region (H-T-H motif); that stretch reads TTAKLAASVGVSEAALYRHF. A coiled-coil region spans residues 117–144; that stretch reads EQDRLQGRINQLFERIEAQLRQVLREKR.

It belongs to the nucleoid occlusion factor SlmA family. As to quaternary structure, homodimer. Interacts with FtsZ.

It is found in the cytoplasm. It localises to the nucleoid. Its function is as follows. Required for nucleoid occlusion (NO) phenomenon, which prevents Z-ring formation and cell division over the nucleoid. Acts as a DNA-associated cell division inhibitor that binds simultaneously chromosomal DNA and FtsZ, and disrupts the assembly of FtsZ polymers. SlmA-DNA-binding sequences (SBS) are dispersed on non-Ter regions of the chromosome, preventing FtsZ polymerization at these regions. The sequence is that of Nucleoid occlusion factor SlmA from Salmonella paratyphi A (strain ATCC 9150 / SARB42).